Here is a 492-residue protein sequence, read N- to C-terminus: Bifunctional purine biosynthesis protein PurH (492 aa).

Residues 1-144 (MKKAILSVSN…KNYKHVTTIV (144 aa)) enclose the MGS-like domain.

It belongs to the PurH family.

It carries out the reaction (6R)-10-formyltetrahydrofolate + 5-amino-1-(5-phospho-beta-D-ribosyl)imidazole-4-carboxamide = 5-formamido-1-(5-phospho-D-ribosyl)imidazole-4-carboxamide + (6S)-5,6,7,8-tetrahydrofolate. The enzyme catalyses IMP + H2O = 5-formamido-1-(5-phospho-D-ribosyl)imidazole-4-carboxamide. The protein operates within purine metabolism; IMP biosynthesis via de novo pathway; 5-formamido-1-(5-phospho-D-ribosyl)imidazole-4-carboxamide from 5-amino-1-(5-phospho-D-ribosyl)imidazole-4-carboxamide (10-formyl THF route): step 1/1. Its pathway is purine metabolism; IMP biosynthesis via de novo pathway; IMP from 5-formamido-1-(5-phospho-D-ribosyl)imidazole-4-carboxamide: step 1/1. This Staphylococcus aureus (strain JH1) protein is Bifunctional purine biosynthesis protein PurH.